We begin with the raw amino-acid sequence, 348 residues long: MTVVSPIRVLVVDDSAFARKVLRQVLSSAEGLEVVGVARDGLDALEKVAELSPDVLTLDLVMPGLDGLGVLRALASSAAAPRVVVVSSAGEESELAVAALQAGAVELVNKPTALATERLYELGGELVAKVRTAAGAVARAPPEPAPSPEATSAPVARAAAKSLVVVGTSTGGPQALTRLLSELPVDFPAPLALALHIPTGYTEAVARRLNAHCALEVFEAVDGLELRPGRVVLARSGQHLKLERHGPVTLARLDRQPLRTAHHPSVDVLFESAARSWGSDVVGLVLTGMGDDGVAGARAIREAGGTVLTESESSCVVYGMPRAVKEAGLATDSAPLEGMLALLRRHVR.

The 118-residue stretch at 8–125 folds into the Response regulatory domain; the sequence is RVLVVDDSAF…TERLYELGGE (118 aa). At aspartate 59 the chain carries 4-aspartylphosphate. In terms of domain architecture, CheB-type methylesterase spans 157 to 348; it reads RAAAKSLVVV…MLALLRRHVR (192 aa). Residues serine 169, histidine 196, and aspartate 292 contribute to the active site.

Belongs to the CheB family. Phosphorylated by CheA. Phosphorylation of the N-terminal regulatory domain activates the methylesterase activity.

It localises to the cytoplasm. It catalyses the reaction [protein]-L-glutamate 5-O-methyl ester + H2O = L-glutamyl-[protein] + methanol + H(+). The catalysed reaction is L-glutaminyl-[protein] + H2O = L-glutamyl-[protein] + NH4(+). Involved in chemotaxis. Part of a chemotaxis signal transduction system that modulates chemotaxis in response to various stimuli. Catalyzes the demethylation of specific methylglutamate residues introduced into the chemoreceptors (methyl-accepting chemotaxis proteins or MCP) by CheR. Also mediates the irreversible deamidation of specific glutamine residues to glutamic acid. In Myxococcus xanthus (strain DK1622), this protein is Protein-glutamate methylesterase/protein-glutamine glutaminase 5.